Here is a 475-residue protein sequence, read N- to C-terminus: MEIOTIC F-BOX protein MOF (475 aa).

Positions 1 to 58 (MRRERDATQIPENPMEGIPQTAAAAAAAAAAEASEPPRKRARVDGGGGGAGEEEEDRL) are disordered. Over residues 22–33 (AAAAAAAAAAEA) the composition is skewed to low complexity. Residues 55-91 (EDRLSDLPDCLLEDILAHLGSRQAVQTSVLSRRWRNL) form the F-box domain.

The protein belongs to the F-box protein family. FBX subfamily. As to quaternary structure, part of a SCF (SKP1-CUL1-F-box protein) E3 ubiquitin-protein ligase complex. Interacts (via F-box domain) directly with SKP1. Highly expressed in the stem, leaf and in the anther during meiosis. Weakly expressed in roots and lemma/palea.

Its subcellular location is the nucleus. It localises to the chromosome. It participates in protein modification; protein ubiquitination. Functionally, probable component of a SCF (SKP1-CULLIN-F-box protein) E3 ubiquitin-protein ligase complex and may function through the ubiquitin-mediated protein degradation or signaling pathway. Required for male meiotic prophase I progression. Required for telomere bouquet formation, homologous chromosome pairing and for the formation of the synaptonemal complex (SC), which stabilizes initial chromosomal axial associations and promotes crossover formation. Involved in meiotic DNA double-strand break (DSB) end-processing and repair, and is important in the recruitment of DSB repair proteins to the DSB sites. This Oryza sativa subsp. japonica (Rice) protein is MEIOTIC F-BOX protein MOF.